The following is a 276-amino-acid chain: 28 kDa ribonucleoprotein, chloroplastic (276 aa).

Residues 1–57 (MATNGCLISLPPFFTTTKSISSYPFLSTQLKPISLSSSLPTLLSLNKRTTQFPTFVS) constitute a chloroplast transit peptide. 2 RRM domains span residues 97-175 (AKLF…KAAP) and 191-269 (YRIY…AAEE).

The protein resides in the plastid. The protein localises to the chloroplast. Functionally, probably involved in the 3'-end processing of chloroplast mRNA's. The sequence is that of 28 kDa ribonucleoprotein, chloroplastic from Nicotiana sylvestris (Wood tobacco).